We begin with the raw amino-acid sequence, 365 residues long: S-adenosylmethionine:tRNA ribosyltransferase-isomerase (365 aa).

This sequence belongs to the QueA family. As to quaternary structure, monomer.

Its subcellular location is the cytoplasm. It carries out the reaction 7-aminomethyl-7-carbaguanosine(34) in tRNA + S-adenosyl-L-methionine = epoxyqueuosine(34) in tRNA + adenine + L-methionine + 2 H(+). It functions in the pathway tRNA modification; tRNA-queuosine biosynthesis. Transfers and isomerizes the ribose moiety from AdoMet to the 7-aminomethyl group of 7-deazaguanine (preQ1-tRNA) to give epoxyqueuosine (oQ-tRNA). This is S-adenosylmethionine:tRNA ribosyltransferase-isomerase from Helicobacter hepaticus (strain ATCC 51449 / 3B1).